Consider the following 681-residue polypeptide: UvrABC system protein B (681 aa).

Positions 30–419 constitute a Helicase ATP-binding domain; it reads QGVRDGRHWQ…GEVVELLVRP (390 aa). 43–50 serves as a coordination point for ATP; that stretch reads GVTGSGKT. The short motif at 96–119 is the Beta-hairpin element; that stretch reads YYDFYQPEAYLPSLDKYIAKDLRI. In terms of domain architecture, Helicase C-terminal spans 435 to 601; the sequence is QIDNLLAEIR…SIVKSVDQIL (167 aa). The region spanning 641-676 is the UVR domain; the sequence is YAIVEGLRLEMQEAAEHMEYEKAAYLRDEITKMEQV.

Belongs to the UvrB family. In terms of assembly, forms a heterotetramer with UvrA during the search for lesions. Interacts with UvrC in an incision complex.

It localises to the cytoplasm. Functionally, the UvrABC repair system catalyzes the recognition and processing of DNA lesions. A damage recognition complex composed of 2 UvrA and 2 UvrB subunits scans DNA for abnormalities. Upon binding of the UvrA(2)B(2) complex to a putative damaged site, the DNA wraps around one UvrB monomer. DNA wrap is dependent on ATP binding by UvrB and probably causes local melting of the DNA helix, facilitating insertion of UvrB beta-hairpin between the DNA strands. Then UvrB probes one DNA strand for the presence of a lesion. If a lesion is found the UvrA subunits dissociate and the UvrB-DNA preincision complex is formed. This complex is subsequently bound by UvrC and the second UvrB is released. If no lesion is found, the DNA wraps around the other UvrB subunit that will check the other stand for damage. This is UvrABC system protein B from Chlorobium chlorochromatii (strain CaD3).